A 43-amino-acid chain; its full sequence is uncharacterized protein (43 aa).

A helical transmembrane segment spans residues 21-41; the sequence is SSFALIVVLFILLIIVGAAIF.

It belongs to the SscA family.

Its subcellular location is the membrane. This is an uncharacterized protein from Bacillus subtilis (strain 168).